Here is a 570-residue protein sequence, read N- to C-terminus: Sulfite reductase [NADPH] hemoprotein beta-component (570 aa).

The [4Fe-4S] cluster site is built by C434, C440, C479, and C483. C483 is a binding site for siroheme.

The protein belongs to the nitrite and sulfite reductase 4Fe-4S domain family. As to quaternary structure, alpha(8)-beta(8). The alpha component is a flavoprotein, the beta component is a hemoprotein. The cofactor is siroheme. It depends on [4Fe-4S] cluster as a cofactor.

It carries out the reaction hydrogen sulfide + 3 NADP(+) + 3 H2O = sulfite + 3 NADPH + 4 H(+). It participates in sulfur metabolism; hydrogen sulfide biosynthesis; hydrogen sulfide from sulfite (NADPH route): step 1/1. In terms of biological role, component of the sulfite reductase complex that catalyzes the 6-electron reduction of sulfite to sulfide. This is one of several activities required for the biosynthesis of L-cysteine from sulfate. The protein is Sulfite reductase [NADPH] hemoprotein beta-component of Salmonella dublin (strain CT_02021853).